We begin with the raw amino-acid sequence, 512 residues long: Cytochrome P450 monooxygenase FrzL (512 aa).

Residues 6 to 26 traverse the membrane as a helical segment; sequence TMLAFVPYLAVFVACYGLVYY. A heme-binding site is contributed by Cys-423.

It belongs to the cytochrome P450 family. Requires heme as cofactor.

Its subcellular location is the membrane. In terms of biological role, cytochrome P450 monooxygenase; part of the gene cluster that mediates the biosynthesis of the alkaloid (-)-FR901483, a potent immunosuppressant that shows efficacy in animal models and a probable inhibitor of purine nucleotide biosynthesis by targeting phosphoribosylpyrophosphate amidotransferase (PPAT). The only unassigned enzyme in the cluster is the second cytochrome P450 monooxygenase FrzL. The biosynthesis of (-)-FR901483 starts with the condensation of two L-tyrosines to yield (S,S)-dityrosyl-piperazine. This process occurs in 3 steps with the non-canonical nonribosomal peptide synthetase FrzA catalyzing the reduction of L-tyrosine into L-tyrosinal, the spontaneous condensation of 2 L-tyrosinal units, and the subsequent reduction by the NmrA-like family domain-containing oxidoreductase FrzB. The cytochrome P450 monooxygenase FrzC then performs coupling between N10 and C1' to morph the piperazine into a 1,4-diazabicyclo[3.2.1]octane spiro-fused to a 2,5-cyclohexadienone. The dienone portion is further reduced to cyclohexanone by the flavin-dependent reductase FrzD. The methyltranserases (MTs) FrzE and FrzF are then involved in the methylation at the C10' amine and the C4 phenolic oxygen, respectively. The order of the two MTs appear to be interchangeable. Cleavage of the C9-N10' bond by the dioxygenase FrzG then leads to formation of a conjugated iminium. In addition to the oxidation of C9, an additional dehydrogenation between C7 and C8 can occur to give a likely shunt product. The next biosynthetic step is the intramolecular aldol condensation catalyzed by the newly identified aldolase FrzH to yield an aza-tricyclic product with the formation of a C9-C3' bond. The short-chain dehydrogenase/reductase FrzI then produces dephospho-(-)-FR901483 that is phosphorylated at C4'-OH into (-)-FR901483 by the phosphotransferase FrzJ. The sequence is that of Cytochrome P450 monooxygenase FrzL from Cladobotryum sp.